The chain runs to 336 residues: Prenytransferase ascA (336 aa).

The segment at 1–26 (MAAKSRSPKRGTSEKTPLVEKEAPYQ) is disordered. Residues 11 to 23 (GTSEKTPLVEKEA) show a composition bias toward basic and acidic residues. Helical transmembrane passes span 52 to 72 (PHGNYMIYFPHIIGLMYASAI), 74 to 94 (PTELSVLGHRAAIFAIWTFLM), 131 to 151 (GHVFTLILTLLGFAAIQSLPI), 179 to 199 (VILGSTLASTIALSAYSVGLP), 206 to 226 (FVPTLCLSATIMLLVVFYDVV), 251 to 271 (LEGLFAFITLSIAGSLTTLGY), 272 to 292 (LVGMGHWFYLFSVGGLTFGLV), and 314 to 334 (FAILNLLTGFIMEYATKDYVV).

The protein belongs to the UbiA prenyltransferase family. It depends on Mg(2+) as a cofactor.

The protein localises to the membrane. It carries out the reaction orsellinate + (2E,6E)-farnesyl diphosphate = ilicicolinate B + diphosphate. It participates in secondary metabolite biosynthesis; terpenoid biosynthesis. Functionally, prenytransferase; part of the asc-1 gene cluster that mediates the biosynthesis of both ascochlorin and ascofuranone, a strong inhibitor of cyanide-insensitive alternative oxidases and a promising drug candidate against African trypanosomiasis. The first step in the pathway is performed by the non-reducing polyketide synthase ascC that produces orsellinic acid by condensing acetyl-CoA with 3 malonyl-CoA units. Orsellinic acid is then prenylated by the prenyltransferase ascA to yield ilicicolinic acid B. Ilicicolinic acid B is further reduced to ilicicolin B by the reductase ascB. The halogenase ascD then chlorinates ilicicolin B to produce ilicicolin A which is converted to ilicicolin A epoxide by the cytochrome P450 monooxygenase ascE that catalyzes stereoselective epoxidation of the terminal double bond of the prenyl group. Ilicicolin A epoxide is the last common precursor for the biosynthesis of ascofuranone and ascochlorin. The terpene cyclase ascF produces a monocyclic terpene, and the cyclization reaction is proposed to be initiated by protonation of the terminal epoxide of ilicicolin A epoxide to generate a monocyclic tertiarycation, which is followed by a series of hydride and methyl shifts with abstraction of proton, leading to the formation of the (14S,15R,19R)-trimethylcyclohexanone ring structure of ilicicolin C, which is finally reduced to ascochlorin by the dehydrogenase ascG. On the other hand, ilicicolin A epoxide is hydroxylated by the cytochrome P450 monooxygenase ascH, and the resultant product is cyclized by the terpene cyclase ascI to ascofuranol via protonation-initiated epoxide ring opening, which facilitates the 6-endo-tet cyclization to form the tetrahy-drofuran ring. Finally, ascofuranol is oxidized into ascofuranone by ascJ. In Acremonium egyptiacum (Oospora egyptiaca), this protein is Prenytransferase ascA.